The sequence spans 638 residues: Trichohyalin-like protein 1 (638 aa).

The EF-hand domain occupies 49–84 (HVFHAVERKLNLLNFDRDGTISFEEFVLAIFSLLNP). Positions 134–638 (SEMASSGQPS…ALEAESLEAQ (505 aa)) are disordered. Over residues 166 to 179 (LPRNVSEPNDPENQ) the composition is skewed to polar residues. 3 stretches are compositionally biased toward basic and acidic residues: residues 221-246 (IPRE…QRPT), 294-309 (DDTK…KDAG), and 318-328 (EEPKADAKVAE). Polar residues predominate over residues 343–357 (DQSVQSRSRNVSETS). 6 stretches are compositionally biased toward basic and acidic residues: residues 358 to 372 (SRGE…HERI), 395 to 409 (REND…KDPS), 419 to 435 (EIKE…HSEE), 479 to 490 (RIQDKPVRKEDH), 526 to 548 (AEPH…KQES), and 622 to 631 (AGRENRKALE).

Belongs to the S-100 family.

In Mus musculus (Mouse), this protein is Trichohyalin-like protein 1 (Tchhl1).